A 332-amino-acid chain; its full sequence is DNA packaging protein (332 aa).

Positions 1–207 are ATPase; it reads MDKSLFYNPQ…SERRKTRFGR (207 aa). Residue 24 to 31 coordinates ATP; sequence GARGIGKS. Residues 233 to 332 form a DNA-binding region; the sequence is KRSKDSKFVF…YELFRKMRIQ (100 aa).

Belongs to the phi29likevirus gp16 family. As to quaternary structure, homopentamer. Interacts with the packaging RNA (pRNA). Part of a DNA-gp3-gp16 complex.

It catalyses the reaction ATP + H2O = ADP + phosphate + H(+). Its function is as follows. ATPase required for the genome encapsidation reaction. Part of the active packaging motor via the binding to the packaging RNA (pRNA), itself fixed to the head-tail connector at the unique portal vertex of the prohead. Binds and supercoils the pre-formed, unit-length DNA bound to gp3 to produce an initiation complex for DNA packaging. Provides the energy to actively pump the viral DNA into the prohead. Approximately one molecule of ATP is used in the packaging of 2 bp of viral DNA. ATP hydrolysis results in a conformational change that causes the arginine/lysine finger of one subunit to move into the active site of its neighbor, where it interacts with the negatively charged oxygens on the gamma-phosphate of ATP. After packaging, the ATPase and the pRNA are released from the prohead. The polypeptide is DNA packaging protein (16) (Bacillus phage phi29 (Bacteriophage phi-29)).